We begin with the raw amino-acid sequence, 215 residues long: Cytochrome b6 (215 aa).

Residues 32–52 (IFYCLGGITFTCFLVQVATGF) form a helical membrane-spanning segment. Cysteine 35 serves as a coordination point for heme c. Histidine 86 and histidine 100 together coordinate heme b. A run of 3 helical transmembrane segments spans residues 90 to 110 (ASMM…TGGF), 116 to 136 (STWI…VTGY), and 186 to 206 (LHTF…FLMI). Residues histidine 187 and histidine 202 each coordinate heme b.

Belongs to the cytochrome b family. PetB subfamily. As to quaternary structure, the 4 large subunits of the cytochrome b6-f complex are cytochrome b6, subunit IV (17 kDa polypeptide, PetD), cytochrome f and the Rieske protein, while the 4 small subunits are PetG, PetL, PetM and PetN. The complex functions as a dimer. The cofactor is heme b. Heme c serves as cofactor.

The protein localises to the plastid. Its subcellular location is the chloroplast thylakoid membrane. In terms of biological role, component of the cytochrome b6-f complex, which mediates electron transfer between photosystem II (PSII) and photosystem I (PSI), cyclic electron flow around PSI, and state transitions. This Tetradesmus obliquus (Green alga) protein is Cytochrome b6.